The chain runs to 369 residues: 3-dehydroquinate synthase (369 aa).

NAD(+) contacts are provided by residues 72-77, 130-131, K142, and K151; these read SGEKEK and TT. Zn(2+) is bound by residues E184, H247, and H264.

The protein belongs to the sugar phosphate cyclases superfamily. Dehydroquinate synthase family. It depends on Co(2+) as a cofactor. Zn(2+) serves as cofactor. NAD(+) is required as a cofactor.

Its subcellular location is the cytoplasm. The enzyme catalyses 7-phospho-2-dehydro-3-deoxy-D-arabino-heptonate = 3-dehydroquinate + phosphate. It participates in metabolic intermediate biosynthesis; chorismate biosynthesis; chorismate from D-erythrose 4-phosphate and phosphoenolpyruvate: step 2/7. In terms of biological role, catalyzes the conversion of 3-deoxy-D-arabino-heptulosonate 7-phosphate (DAHP) to dehydroquinate (DHQ). This is 3-dehydroquinate synthase from Bacillus cytotoxicus (strain DSM 22905 / CIP 110041 / 391-98 / NVH 391-98).